Here is an 840-residue protein sequence, read N- to C-terminus: MPSYLTRQKTRQTFSWVGRPLPNRKQFQQMYREICMKINDGSEIHIKVGQFVLIQGEDNKKPYVAKLIELFQNGAEVPPKKCARVQWFVRFLEIPVSKRHLLGRSPPAQEIFWYDCSDWDNKINVETIIGPVQVVALAPEEVIPVDQKSEETLFVKLSWNKKDFAPLPPEVLAALREQEDSPEWQKPLKAKIKNVKSPARNTTEQEVKGIKSNHSTSKFHQTPANIVIPNAKKSLELDGLGFTRKPNTRWSKKSSCDSLDYQKTSKRRAAFSETTSPPKKPNKPREIKPSSALETRVKNGQTQPFCAKSSVVLRARNPAMTTTKLGVDNTLSPIRNGLRSSVVPSGGLTPVYIRRKAKEQETHKEPIRTSRVHRKSSLLTLKRIRQQLCLLDGDDRDQEEEESVDSESEEEDEFISSLPTRNSLGQSRTRQTPSKSPQKNPKPRTPHRATPQIRDRNLAVQEPASALEEARLRLHVSAVPDSLPCREQEFQDIYSFVESKLLDGTGGCMYISGVPGTGKTATVHEVIRCLQQAAETDDVPPFQYVEVNGMKLTEPHQVYVQILKKLTGQKATANHAAELLAKQFCGQGSQKETTVLLVDELDLLWTHKQDVMYNLFDWPTHKGAHLIVLTIANTMDLPERIMMNRVSSRLGLTRMSFQPYSHSQLKQILVSRLRNLRAFEDDAIQLVARKVAALSGDARRCLDICRRATEICELSHLRGDSLSLVTVAHLMEAIDEMFSSSYITAIKNSSVVEQSFLRAIIAEFRRSGLEEATFQQIYSQHVALCRMEGLPYPTMSETMAVCSRLGSCRLLLVEPSRNDLLLRVRLNVSQNDVLFALKEE.

In terms of domain architecture, BAH spans 44-170; sequence IHIKVGQFVL…KKDFAPLPPE (127 aa). 2 disordered regions span residues 195–218 and 242–301; these read VKSPARNTTEQEVKGIKSNHSTSK and FTRK…KNGQ. Residues serine 197, serine 255, serine 258, serine 276, serine 291, and serine 332 each carry the phosphoserine modification. Over residues 392 to 414 the composition is skewed to acidic residues; that stretch reads DGDDRDQEEEESVDSESEEEDEF. A disordered region spans residues 392-456; it reads DGDDRDQEEE…HRATPQIRDR (65 aa). Over residues 418–439 the composition is skewed to polar residues; the sequence is LPTRNSLGQSRTRQTPSKSPQK. Residues valine 479 and 513–521 each bind ATP; that span reads GVPGTGKTA. Positions 480-840 are necessary and sufficient for ORC complex assembly; sequence PDSLPCREQE…NDVLFALKEE (361 aa). Mg(2+)-binding residues include aspartate 599 and glutamate 600. Residues glutamate 600, asparagine 633, and arginine 699 each contribute to the ATP site.

The protein belongs to the ORC1 family. Component of ORC, a complex composed of at least 6 subunits: ORC1, ORC2, ORC3, ORC4, ORC5 and ORC6. ORC is regulated in a cell-cycle dependent manner. It is sequentially assembled at the exit from anaphase of mitosis and disassembled as cells enter S phase. Interacts with CDC6 and KAT7/HBO1. Interacts with LRWD1 predominantly during the G1 phase and with less affinity during mitosis, when phosphorylated. In terms of processing, phosphorylated during mitosis.

Its subcellular location is the nucleus. Functionally, component of the origin recognition complex (ORC) that binds origins of replication. DNA-binding is ATP-dependent. The specific DNA sequences that define origins of replication have not been identified yet. ORC is required to assemble the pre-replication complex necessary to initiate DNA replication. In Mus musculus (Mouse), this protein is Origin recognition complex subunit 1 (Orc1).